The chain runs to 100 residues: Small ribosomal subunit protein uS14c (100 aa).

The protein belongs to the universal ribosomal protein uS14 family. In terms of assembly, part of the 30S ribosomal subunit.

The protein localises to the plastid. It localises to the chloroplast. Binds 16S rRNA, required for the assembly of 30S particles. This chain is Small ribosomal subunit protein uS14c, found in Phaeodactylum tricornutum (strain CCAP 1055/1).